Reading from the N-terminus, the 298-residue chain is Urease accessory protein UreD 3 (298 aa).

Residues methionine 1 to serine 30 are disordered.

This sequence belongs to the UreD family. In terms of assembly, ureD, UreF and UreG form a complex that acts as a GTP-hydrolysis-dependent molecular chaperone, activating the urease apoprotein by helping to assemble the nickel containing metallocenter of UreC. The UreE protein probably delivers the nickel.

The protein localises to the cytoplasm. In terms of biological role, required for maturation of urease via the functional incorporation of the urease nickel metallocenter. In Methylorubrum extorquens (strain PA1) (Methylobacterium extorquens), this protein is Urease accessory protein UreD 3.